A 196-amino-acid polypeptide reads, in one-letter code: Small ribosomal subunit protein uS4c (196 aa).

Positions 15–43 (LGALPGLTRKTPKSGSNQKKKFHSGKKEQ) are disordered. Residues 89–150 (MRLDNILFRL…NQRSKRLVQN (62 aa)) form the S4 RNA-binding domain.

This sequence belongs to the universal ribosomal protein uS4 family. Part of the 30S ribosomal subunit. Contacts protein S5. The interaction surface between S4 and S5 is involved in control of translational fidelity.

The protein localises to the plastid. It is found in the chloroplast. In terms of biological role, one of the primary rRNA binding proteins, it binds directly to 16S rRNA where it nucleates assembly of the body of the 30S subunit. With S5 and S12 plays an important role in translational accuracy. The sequence is that of Small ribosomal subunit protein uS4c (rps4) from Bothriochloa ischaemum (Yellow bluestem).